A 489-amino-acid polypeptide reads, in one-letter code: 3-octaprenyl-4-hydroxybenzoate carboxy-lyase (489 aa).

Asn-172 is a binding site for Mn(2+). Prenylated FMN contacts are provided by residues 175-177, 189-191, and 194-195; these read IYR, RWL, and RG. Mn(2+) is bound at residue Glu-238. Residue Asp-287 is the Proton donor of the active site.

This sequence belongs to the UbiD family. Homohexamer. It depends on prenylated FMN as a cofactor. Mn(2+) is required as a cofactor.

The protein resides in the cell membrane. The enzyme catalyses a 4-hydroxy-3-(all-trans-polyprenyl)benzoate + H(+) = a 2-(all-trans-polyprenyl)phenol + CO2. The protein operates within cofactor biosynthesis; ubiquinone biosynthesis. Its function is as follows. Catalyzes the decarboxylation of 3-octaprenyl-4-hydroxy benzoate to 2-octaprenylphenol, an intermediate step in ubiquinone biosynthesis. The polypeptide is 3-octaprenyl-4-hydroxybenzoate carboxy-lyase (Tolumonas auensis (strain DSM 9187 / NBRC 110442 / TA 4)).